Reading from the N-terminus, the 248-residue chain is Tabserin (248 aa).

Positions 1–19 are cleaved as a signal peptide; that stretch reads MLKYSALFLYLIYVGGSES. Residues 24 to 248 form the Peptidase S1 domain; that stretch reads IVGGVPVAEE…PYFENGLRKR (225 aa). Cys-49 and Cys-65 are joined by a disulfide. Residues His-64 and Asp-111 each act as charge relay system in the active site. Intrachain disulfides connect Cys-175–Cys-189 and Cys-201–Cys-226. The Charge relay system role is filled by Ser-205.

This sequence belongs to the peptidase S1 family. As to expression, expressed in salivary glands.

It localises to the secreted. In terms of biological role, serine protease that inhibits blood coagulation in a dose-dependent manner. May act by destroying coagulant factors to inhibit blood coagulation. The protein is Tabserin of Tabanus yao (Horsefly).